The sequence spans 88 residues: Class I hydrophobin F (88 aa).

An N-terminal signal peptide occupies residues Met1–Thr21. Disulfide bonds link Cys30–Cys67, Cys34–Cys58, Cys35–Cys51, and Cys68–Cys84.

It belongs to the fungal hydrophobin family.

Its subcellular location is the secreted. The protein localises to the cell wall. It localises to the vacuole. The protein resides in the cytoplasmic vesicle. Its function is as follows. Aerial growth, conidiation, and dispersal of filamentous fungi in the environment rely upon a capability of their secreting small amphipathic proteins called hydrophobins (HPBs) with low sequence identity. Class I can self-assemble into an outermost layer of rodlet bundles on aerial cell surfaces, conferring cellular hydrophobicity that supports fungal growth, development and dispersal; whereas Class II form highly ordered films at water-air interfaces through intermolecular interactions but contribute nothing to the rodlet structure. Hyd1F contributes to certain cell wall-related features, such as hydrophobicity but is not involved in cell wall-related events during fungal proliferation in host hemocoel. Does not contribute to conidial hydrophobicity. In Beauveria bassiana (strain ARSEF 2860) (White muscardine disease fungus), this protein is Class I hydrophobin F.